A 210-amino-acid chain; its full sequence is Synaptosomal-associated protein 23 (210 aa).

M1 carries the N-acetylmethionine modification. Residues S5, S20, S23, and S34 each carry the phosphoserine modification. A t-SNARE coiled-coil homology 1 domain is found at 14–76 (HQVTDESLES…REAEKTLTEL (63 aa)). Residues 23-76 (STRRILGLAIESQDAGIKTITMLDEQGEQLNRIEEGMDQINKDMREAEKTLTEL) are a coiled coil. Residues C79, C80, C83, C85, and C87 are each lipidated (S-palmitoyl cysteine). The interval 104–136 (GDGGDSSPSNVVSKQPSRITNGQPQQTTGAASG) is disordered. Over residues 109 to 133 (SSPSNVVSKQPSRITNGQPQQTTGA) the composition is skewed to polar residues. Residues S110 and S160 each carry the phosphoserine modification. A t-SNARE coiled-coil homology 2 domain is found at 145–207 (DAREDEMEEN…DIANTRAKKL (63 aa)).

This sequence belongs to the SNAP-25 family. Homotetramer (via coiled-coil domain), also forms heterotetramers with STX4 and VAMP3. Found in a complex with VAMP8 and STX1A. Found in a complex with VAMP8 and STX4 in pancreas. Interacts simultaneously with SNAPIN and SYN4. Interacts with STX1A. Interacts with STX12. Interacts tightly to multiple syntaxins and synaptobrevins/VAMPs. Interacts with ZDHHC13 (via ANK repeats). Interacts with ZDHHC17 (via ANK repeats).

The protein resides in the cell membrane. It is found in the synapse. It localises to the synaptosome. The protein localises to the cytoplasmic vesicle membrane. In terms of biological role, essential component of the high affinity receptor for the general membrane fusion machinery and an important regulator of transport vesicle docking and fusion. This chain is Synaptosomal-associated protein 23 (Snap23), found in Rattus norvegicus (Rat).